The chain runs to 180 residues: Iron sulfur cluster assembly protein 1, mitochondrial (180 aa).

Belongs to the NifU family. In terms of assembly, component of the core Fe-S cluster (ISC) assembly machinery. [2Fe-2S] cluster is required as a cofactor.

Its subcellular location is the mitochondrion matrix. The protein operates within cofactor biosynthesis; iron-sulfur cluster biosynthesis. Scaffold protein for the de novo synthesis of iron-sulfur (Fe-S) clusters within mitochondria, which is required for maturation of both mitochondrial and cytoplasmic [2Fe-2S] and [4Fe-4S] proteins. First, a [2Fe-2S] cluster is transiently assembled on the scaffold protein ISU1. In a second step, the cluster is released from ISU1, transferred to a glutaredoxin, followed by the formation of mitochondrial [2Fe-2S] proteins, the synthesis of [4Fe-4S] clusters and their target-specific insertion into the recipient apoproteins. Cluster assembly on ISU1 depends on the function of the cysteine desulfurase complex NFS1-ISD11, which serves as the sulfur donor for cluster synthesis, the iron-binding protein frataxin as the putative iron donor, and the electron transfer chain comprised of ferredoxin reductase and ferredoxin, which receive their electrons from NADH. This Kluyveromyces lactis (strain ATCC 8585 / CBS 2359 / DSM 70799 / NBRC 1267 / NRRL Y-1140 / WM37) (Yeast) protein is Iron sulfur cluster assembly protein 1, mitochondrial (ISU1).